We begin with the raw amino-acid sequence, 198 residues long: Small ribosomal subunit protein uS4 (198 aa).

In terms of domain architecture, S4 RNA-binding spans 91 to 154 (SRLDNVVYRL…KNLNIVQEAL (64 aa)).

Belongs to the universal ribosomal protein uS4 family. As to quaternary structure, part of the 30S ribosomal subunit. Contacts protein S5. The interaction surface between S4 and S5 is involved in control of translational fidelity.

Functionally, one of the primary rRNA binding proteins, it binds directly to 16S rRNA where it nucleates assembly of the body of the 30S subunit. Its function is as follows. With S5 and S12 plays an important role in translational accuracy. The polypeptide is Small ribosomal subunit protein uS4 (Aster yellows witches'-broom phytoplasma (strain AYWB)).